A 310-amino-acid chain; its full sequence is GPN-loop GTPase 2 (310 aa).

N-acetylalanine is present on A2. Residue 19–24 (GSGKTT) coordinates GTP. Residues 76-78 (GPN) carry the Gly-Pro-Asn (GPN)-loop; involved in dimer interface motif. A GTP-binding site is contributed by 178–181 (SKMD).

This sequence belongs to the GPN-loop GTPase family. As to quaternary structure, heterodimers with GPN1 or GPN3. Binds to RNA polymerase II (RNAPII).

In terms of biological role, small GTPase required for proper localization of RNA polymerase II and III (RNAPII and RNAPIII). May act at an RNAP assembly step prior to nuclear import. The sequence is that of GPN-loop GTPase 2 from Rattus norvegicus (Rat).